Here is a 121-residue protein sequence, read N- to C-terminus: Large ribosomal subunit protein bL12 (121 aa).

Belongs to the bacterial ribosomal protein bL12 family. As to quaternary structure, homodimer. Part of the ribosomal stalk of the 50S ribosomal subunit. Forms a multimeric L10(L12)X complex, where L10 forms an elongated spine to which 2 to 4 L12 dimers bind in a sequential fashion. Binds GTP-bound translation factors.

Functionally, forms part of the ribosomal stalk which helps the ribosome interact with GTP-bound translation factors. Is thus essential for accurate translation. The protein is Large ribosomal subunit protein bL12 of Salmonella agona (strain SL483).